Here is a 121-residue protein sequence, read N- to C-terminus: Large ribosomal subunit protein uL22 (121 aa).

The protein belongs to the universal ribosomal protein uL22 family. Part of the 50S ribosomal subunit.

This protein binds specifically to 23S rRNA; its binding is stimulated by other ribosomal proteins, e.g. L4, L17, and L20. It is important during the early stages of 50S assembly. It makes multiple contacts with different domains of the 23S rRNA in the assembled 50S subunit and ribosome. Functionally, the globular domain of the protein is located near the polypeptide exit tunnel on the outside of the subunit, while an extended beta-hairpin is found that lines the wall of the exit tunnel in the center of the 70S ribosome. The protein is Large ribosomal subunit protein uL22 of Synechococcus sp. (strain CC9902).